Consider the following 486-residue polypeptide: MIATLLSSLLLTGPISAGAETQGLLPAQDLLPDIGTSAGATLSIDQEMAMGDFYVRQMRASAPLIYDPLLTQYINTLGNRLVANANSVRTPFHFYLVNNDQINAFAFFGGNVVLHSALFRYTDNESELASVLAHEISHVTQRHLARAMEEQQRLAPLTWVGVLGSILLTMASPQAGMAGLSGTLAGAQQGIISFTQGNEQEADRIGIQVLQRSGFDPQAMPNFLQKLADQSRYVSKPPEMLLTHPLPDSRLSDARNRANQMKPHPTASSQDYLFAKMRILGMYGADENSLTPELLDKLSKGTVREQLAAKYGQAVQLYQAKKYDEARNLLQPLLAQQPGNIWFLDLMTDIDLGQNKSAAAIARLQNAMVKQNDEPVLQLNLANAYVQGRQPAAAIKLLHRYTFAYPNDPNGWDLLAQATATQGLRDQELAARAESLALSGKLTQAIGLLSDASARVKLGSLEQARYDARIDQLRRLNERFRKYQKS.

An N-terminal signal peptide occupies residues 1-19 (MIATLLSSLLLTGPISAGA). Residue His134 coordinates Zn(2+). Glu135 is an active-site residue. Zn(2+)-binding residues include His138 and Glu199. The active-site Proton donor is Asp203.

Belongs to the peptidase M48 family. BepA subfamily. The cofactor is Zn(2+).

The protein resides in the periplasm. Its function is as follows. Functions both as a chaperone and a metalloprotease. Maintains the integrity of the outer membrane by promoting either the assembly or the elimination of outer membrane proteins, depending on their folding state. This is Beta-barrel assembly-enhancing protease from Yersinia pestis.